The chain runs to 345 residues: MEKTIGLEIIEVVEQAAIASARLMGKGEKNEADRVAVEAMRVRMNQVEMLGRIVIGEGERDEAPMLYIGEEVGIYRDADKRAGVPAGKLVEIDIAVDPCEGTNLCAYGQPGSMAVLAISEKGGLFAAPDFYMKKLAAPPAAKGKVDINKSATENLKILSECLDRAIDELVVVVMDRPRHKELIQEIRQAGARVRLISDGDVSAAISCGFAGTNTHALMGIGAAPEGVISAAAMRCLGGHFQGQLIYDPEVVKTGLIGESRESNIARLQEMGITDPDRVYDANELASGQEVLFAACGITPGLLMEGVRFFKGGARTQSLVISSQSRTARFVDTVHMFDDVKTVSLR.

Mn(2+) contacts are provided by aspartate 33, glutamate 57, aspartate 97, and glutamate 100. Residues 100 to 102 (EGT), tyrosine 131, 176 to 178 (RPR), and 198 to 200 (DGD) contribute to the substrate site. Glutamate 225 contacts Mn(2+).

Belongs to the FBPase class 2 family. In terms of assembly, homotetramer. Mn(2+) serves as cofactor.

The enzyme catalyses beta-D-fructose 1,6-bisphosphate + H2O = beta-D-fructose 6-phosphate + phosphate. It carries out the reaction D-sedoheptulose 1,7-bisphosphate + H2O = D-sedoheptulose 7-phosphate + phosphate. The protein operates within carbohydrate biosynthesis; Calvin cycle. Inhibited by AMP and slightly innibited by hydrogen peroxyde. In terms of biological role, catalyzes the hydrolysis of fructose 1,6-bisphosphate (Fru 1,6-P2) and sedoheptulose 1,7-bisphosphate (Sed 1,7-P2) to fructose 6-phosphate and sedoheptulose 7-phosphate, respectively. The chain is D-fructose 1,6-bisphosphatase class 2/sedoheptulose 1,7-bisphosphatase from Synechococcus elongatus (strain ATCC 33912 / PCC 7942 / FACHB-805) (Anacystis nidulans R2).